The chain runs to 185 residues: Elongation factor P (185 aa).

It belongs to the elongation factor P family.

It is found in the cytoplasm. It functions in the pathway protein biosynthesis; polypeptide chain elongation. Its function is as follows. Involved in peptide bond synthesis. Stimulates efficient translation and peptide-bond synthesis on native or reconstituted 70S ribosomes in vitro. Probably functions indirectly by altering the affinity of the ribosome for aminoacyl-tRNA, thus increasing their reactivity as acceptors for peptidyl transferase. This Rippkaea orientalis (strain PCC 8801 / RF-1) (Cyanothece sp. (strain PCC 8801)) protein is Elongation factor P.